A 342-amino-acid polypeptide reads, in one-letter code: Isopentenyl-diphosphate delta-isomerase (342 aa).

Residue Arg11–Lys12 coordinates substrate. FMN is bound by residues Ser68, Ser69–Thr71, Ser99, and Asn127. A substrate-binding site is contributed by Ser99 to Arg101. Gln162 is a binding site for substrate. Glu163 is a Mg(2+) binding site. Residues Lys194, Thr224, Gly274 to Lys276, and Ala295 to Gly296 each bind FMN.

This sequence belongs to the IPP isomerase type 2 family. As to quaternary structure, homooctamer. Dimer of tetramers. Requires FMN as cofactor. NADPH serves as cofactor. Mg(2+) is required as a cofactor.

The protein resides in the cytoplasm. The catalysed reaction is isopentenyl diphosphate = dimethylallyl diphosphate. In terms of biological role, involved in the biosynthesis of isoprenoids. Catalyzes the 1,3-allylic rearrangement of the homoallylic substrate isopentenyl (IPP) to its allylic isomer, dimethylallyl diphosphate (DMAPP). The sequence is that of Isopentenyl-diphosphate delta-isomerase from Rickettsia canadensis (strain McKiel).